The primary structure comprises 288 residues: Nucleotide-binding protein APP7_0339 (288 aa).

8-15 (GRSGSGKS) contacts ATP. Position 56–59 (56–59 (DIRN)) interacts with GTP.

This sequence belongs to the RapZ-like family.

Its function is as follows. Displays ATPase and GTPase activities. The chain is Nucleotide-binding protein APP7_0339 from Actinobacillus pleuropneumoniae serotype 7 (strain AP76).